The primary structure comprises 336 residues: Ketol-acid reductoisomerase (NADP(+)) 1 (336 aa).

The KARI N-terminal Rossmann domain occupies A2–T181. NADP(+)-binding positions include Y25–Q28, R48, S52, and D82–Q85. The active site involves H107. G133 is an NADP(+) binding site. Positions T182 to V327 constitute a KARI C-terminal knotted domain. Residues D190, E194, E226, and E230 each coordinate Mg(2+). S251 serves as a coordination point for substrate.

Belongs to the ketol-acid reductoisomerase family. Mg(2+) is required as a cofactor.

It catalyses the reaction (2R)-2,3-dihydroxy-3-methylbutanoate + NADP(+) = (2S)-2-acetolactate + NADPH + H(+). The catalysed reaction is (2R,3R)-2,3-dihydroxy-3-methylpentanoate + NADP(+) = (S)-2-ethyl-2-hydroxy-3-oxobutanoate + NADPH + H(+). It participates in amino-acid biosynthesis; L-isoleucine biosynthesis; L-isoleucine from 2-oxobutanoate: step 2/4. The protein operates within amino-acid biosynthesis; L-valine biosynthesis; L-valine from pyruvate: step 2/4. In terms of biological role, involved in the biosynthesis of branched-chain amino acids (BCAA). Catalyzes an alkyl-migration followed by a ketol-acid reduction of (S)-2-acetolactate (S2AL) to yield (R)-2,3-dihydroxy-isovalerate. In the isomerase reaction, S2AL is rearranged via a Mg-dependent methyl migration to produce 3-hydroxy-3-methyl-2-ketobutyrate (HMKB). In the reductase reaction, this 2-ketoacid undergoes a metal-dependent reduction by NADPH to yield (R)-2,3-dihydroxy-isovalerate. The chain is Ketol-acid reductoisomerase (NADP(+)) 1 from Bacillus anthracis.